The sequence spans 262 residues: Acyl-[acyl-carrier-protein]--UDP-N-acetylglucosamine O-acyltransferase (262 aa).

This sequence belongs to the transferase hexapeptide repeat family. LpxA subfamily. Homotrimer.

The protein resides in the cytoplasm. The enzyme catalyses a (3R)-hydroxyacyl-[ACP] + UDP-N-acetyl-alpha-D-glucosamine = a UDP-3-O-[(3R)-3-hydroxyacyl]-N-acetyl-alpha-D-glucosamine + holo-[ACP]. It participates in glycolipid biosynthesis; lipid IV(A) biosynthesis; lipid IV(A) from (3R)-3-hydroxytetradecanoyl-[acyl-carrier-protein] and UDP-N-acetyl-alpha-D-glucosamine: step 1/6. Involved in the biosynthesis of lipid A, a phosphorylated glycolipid that anchors the lipopolysaccharide to the outer membrane of the cell. This chain is Acyl-[acyl-carrier-protein]--UDP-N-acetylglucosamine O-acyltransferase, found in Burkholderia thailandensis (strain ATCC 700388 / DSM 13276 / CCUG 48851 / CIP 106301 / E264).